The sequence spans 200 residues: Snake venom metalloproteinase hemorrhagic factor 2 (200 aa).

The 197-residue stretch at 4-200 folds into the Peptidase M12B domain; that stretch reads KYIELVVVAD…RKPQCILNKP (197 aa). Glutamate 7 provides a ligand contact to Ca(2+). N-linked (GlcNAc...) asparagine glycosylation is present at asparagine 70. Aspartate 91 lines the Ca(2+) pocket. 3 cysteine pairs are disulfide-bonded: cysteine 115–cysteine 195, cysteine 155–cysteine 179, and cysteine 157–cysteine 162. Histidine 140 provides a ligand contact to Zn(2+). The active site involves glutamate 141. The Zn(2+) site is built by histidine 144 and histidine 150. Residues cysteine 195 and asparagine 198 each contribute to the Ca(2+) site.

Belongs to the venom metalloproteinase (M12B) family. P-I subfamily. In terms of assembly, monomer. It depends on Zn(2+) as a cofactor. Expressed by the venom gland.

It is found in the secreted. Functionally, snake venom zinc metalloproteinase that induces weak hemorrhage and mild myonecrosis. Shows mild myotoxicity by killing myocytes. Also induces edema in the mouse footpad at doses where hemorrhage is absent. In vitro, degrades laminin, fibronectin, and type IV collagen, suggesting this toxin play a role in local tissue damage by degrading extracellular matrix, and possibly by degrading muscle extracellular matrix. Hemorrhage is not due to cytotoxicity towards endothelial cells in culture, and may only play a minor role in local bleeding characteristic of L.muta envenomations. Also induces the synthesis of several endogenous matrix metalloproteinases, which in turn, may participate in extracellular matrix degradation. In Lachesis muta muta (Bushmaster), this protein is Snake venom metalloproteinase hemorrhagic factor 2.